The primary structure comprises 270 residues: MINKINFVKMHGLGNDFVIVNKRDLATSYNLSHLAKNMADRHTGIGCDQCIIYEENNDFYTMIIYNIDGSSAKLCGNAIRCLAKLIYLDTGKQNITVMVGKKKLLCNVKAANKISVNVGNVSFNETWMPSRDKIWKFAERYMLDLKEMLCVDIGNPHLIIFSKLEPQDKTIIGQKLQAKELFADGVNVNFAEVKDNKIYLSVWERGAGLTLACGSGACASFAAGLKLGFVHSPSTVVFEYGNLIMREEDGNIIMQGAATFVMRGEYYYEK.

Residues asparagine 15, glutamine 49, and asparagine 66 each coordinate substrate. Catalysis depends on cysteine 75, which acts as the Proton donor. Residues glycine 76–asparagine 77, asparagine 155, asparagine 187, and glutamate 204–arginine 205 each bind substrate. Cysteine 213 serves as the catalytic Proton acceptor. Glycine 214–serine 215 serves as a coordination point for substrate.

Belongs to the diaminopimelate epimerase family. As to quaternary structure, homodimer.

It localises to the cytoplasm. The enzyme catalyses (2S,6S)-2,6-diaminopimelate = meso-2,6-diaminopimelate. It functions in the pathway amino-acid biosynthesis; L-lysine biosynthesis via DAP pathway; DL-2,6-diaminopimelate from LL-2,6-diaminopimelate: step 1/1. In terms of biological role, catalyzes the stereoinversion of LL-2,6-diaminopimelate (L,L-DAP) to meso-diaminopimelate (meso-DAP), a precursor of L-lysine and an essential component of the bacterial peptidoglycan. The protein is Diaminopimelate epimerase of Rickettsia prowazekii (strain Madrid E).